The sequence spans 1069 residues: Degenerin-like protein del-10 (1069 aa).

Topologically, residues 1–95 are cytoplasmic; it reads MVRMAERLAE…LNAASPVTRG (95 aa). Residues 96-116 traverse the membrane as a helical segment; the sequence is LWCMIIIAFVILVLVQCYSQI. At 117–830 the chain is on the extracellular side; sequence KLYISEPVAT…FWSLACDIGG (714 aa). N-linked (GlcNAc...) asparagine glycans are attached at residues Asn216, Asn290, Asn374, Asn454, Asn539, Asn545, and Asn584. A helical membrane pass occupies residues 831-851; sequence ALGLFLGASLLTIIEIVYLCI. The Cytoplasmic portion of the chain corresponds to 852 to 1069; sequence QYGLCGKRAR…EEDDDKHSYV (218 aa). 2 disordered regions span residues 898–948 and 960–1069; these read KKSQ…TLTP and RNSQ…HSYV. Positions 915-928 are enriched in basic and acidic residues; the sequence is GDKFRSRASSEESK. Residues 938-948 show a composition bias toward polar residues; it reads NDPSGNSTLTP. The span at 967–978 shows a compositional bias: basic and acidic residues; sequence YHDDHHPEDHYY.

This sequence belongs to the amiloride-sensitive sodium channel (TC 1.A.6) family.

The protein localises to the membrane. The polypeptide is Degenerin-like protein del-10 (Caenorhabditis elegans).